The primary structure comprises 629 residues: Long-chain-fatty-acid--AMP ligase FadD32 (629 aa).

ATP is bound by residues 186–191 (TSGSTR), serine 341, alanine 345, aspartate 468, and arginine 482.

It belongs to the ATP-dependent AMP-binding enzyme family. Monomer.

The enzyme catalyses a long-chain fatty acid + holo-[ACP] + ATP = a long-chain fatty acyl-[ACP] + AMP + diphosphate. The catalysed reaction is dodecanoate + ATP + H(+) = dodecanoyl-AMP + diphosphate. It catalyses the reaction tetradecanoate + ATP + H(+) = tetradecanoyl-AMP + diphosphate. It functions in the pathway lipid metabolism; mycolic acid biosynthesis. The acyl-AMP ligase activity is inhibited by the alkylphosphate esters of AMP, adenosine 50-dodecylphosphate (AMPC12) and eicosyl-AMP (AMPC20). Functionally, involved in the biosynthesis of mycolic acids. Catalyzes the activation of long-chain fatty acids as acyl-adenylates (acyl-AMP), which are then transferred to the phosphopantetheine arm of the polyketide synthase Pks13 for further chain extension. Can use dodecanoate (C12) and tetradecanoate (C14). The chain is Long-chain-fatty-acid--AMP ligase FadD32 (fadD32) from Mycobacterium marinum (strain ATCC BAA-535 / M).